Reading from the N-terminus, the 228-residue chain is Orotate phosphoribosyltransferase (228 aa).

5-phospho-alpha-D-ribose 1-diphosphate is bound by residues Arg107, Lys108, Lys111, and 133–141 (EDLTTDGGS). Residue Thr137 coordinates orotate.

This sequence belongs to the purine/pyrimidine phosphoribosyltransferase family. PyrE subfamily. In terms of assembly, homodimer. Mg(2+) is required as a cofactor.

The enzyme catalyses orotidine 5'-phosphate + diphosphate = orotate + 5-phospho-alpha-D-ribose 1-diphosphate. Its pathway is pyrimidine metabolism; UMP biosynthesis via de novo pathway; UMP from orotate: step 1/2. Functionally, catalyzes the transfer of a ribosyl phosphate group from 5-phosphoribose 1-diphosphate to orotate, leading to the formation of orotidine monophosphate (OMP). The sequence is that of Orotate phosphoribosyltransferase from Jannaschia sp. (strain CCS1).